The chain runs to 64 residues: Disintegrin VA6 (64 aa).

One can recognise a Disintegrin domain in the interval 1–64 (NSANPCCDPV…SDCPRNPYKS (64 aa)). 4 cysteine pairs are disulfide-bonded: Cys-6-Cys-29, Cys-20-Cys-26, Cys-25-Cys-50, and Cys-38-Cys-57. Residues 42-44 (RGD) carry the Cell attachment site motif.

Belongs to the venom metalloproteinase (M12B) family. P-II subfamily. P-IId sub-subfamily. As to quaternary structure, homodimer; disulfide-linked. In terms of tissue distribution, expressed by the venom gland.

The protein localises to the secreted. Poor inhibitor of platelet aggregation. The disintegrin inhibits the adhesion of cells expressing the RGD-dependent integrin alpha-5/beta-1 (ITGA5/ITGB1) to immobilized fibronectin. Inhibition on alpha-IIb/beta-3 (ITGA2B/ITGB3) is low, and there is no inhibition on alpha-1/beta-1 (ITGA1/ITGB1), alpha-2/beta-1 (ITGA2/ITGB1) and alpha-6/beta-1 (ITGA6/ITGB1). In Vipera ammodytes ammodytes (Western sand viper), this protein is Disintegrin VA6.